The sequence spans 177 residues: Probable adenylyl-sulfate kinase (177 aa).

12 to 19 (GLSGAGKT) provides a ligand contact to ATP. Ser86 (phosphoserine intermediate) is an active-site residue.

The protein belongs to the APS kinase family.

It catalyses the reaction adenosine 5'-phosphosulfate + ATP = 3'-phosphoadenylyl sulfate + ADP + H(+). It functions in the pathway sulfur metabolism; hydrogen sulfide biosynthesis; sulfite from sulfate: step 2/3. Its function is as follows. Catalyzes the synthesis of activated sulfate. The chain is Probable adenylyl-sulfate kinase (cysC) from Synechocystis sp. (strain ATCC 27184 / PCC 6803 / Kazusa).